Consider the following 88-residue polypeptide: Small ribosomal subunit protein uS19 (88 aa).

The protein belongs to the universal ribosomal protein uS19 family.

Its function is as follows. Protein S19 forms a complex with S13 that binds strongly to the 16S ribosomal RNA. The protein is Small ribosomal subunit protein uS19 of Carsonella ruddii (strain PV).